The following is a 159-amino-acid chain: Transcriptional repressor NrdR (159 aa).

Residues 3 to 34 (CPFCRHDDTQVVDSRVSEDGAAIRRRRRCSAC) fold into a zinc finger. The ATP-cone domain occupies 49 to 139 (PAVVKKDGSR…VYRRFEDVSE (91 aa)).

The protein belongs to the NrdR family. Zn(2+) is required as a cofactor.

Its function is as follows. Negatively regulates transcription of bacterial ribonucleotide reductase nrd genes and operons by binding to NrdR-boxes. The chain is Transcriptional repressor NrdR from Burkholderia thailandensis (strain ATCC 700388 / DSM 13276 / CCUG 48851 / CIP 106301 / E264).